The primary structure comprises 80 residues: Large ribosomal subunit protein uL29 (80 aa).

The protein belongs to the universal ribosomal protein uL29 family.

The sequence is that of Large ribosomal subunit protein uL29 (rpmC) from Mycobacterium leprae (strain TN).